Consider the following 211-residue polypeptide: NADH-quinone oxidoreductase subunit C (211 aa).

Belongs to the complex I 30 kDa subunit family. In terms of assembly, NDH-1 is composed of 14 different subunits. Subunits NuoB, C, D, E, F, and G constitute the peripheral sector of the complex.

It is found in the cell inner membrane. The catalysed reaction is a quinone + NADH + 5 H(+)(in) = a quinol + NAD(+) + 4 H(+)(out). Functionally, NDH-1 shuttles electrons from NADH, via FMN and iron-sulfur (Fe-S) centers, to quinones in the respiratory chain. The immediate electron acceptor for the enzyme in this species is believed to be ubiquinone. Couples the redox reaction to proton translocation (for every two electrons transferred, four hydrogen ions are translocated across the cytoplasmic membrane), and thus conserves the redox energy in a proton gradient. The sequence is that of NADH-quinone oxidoreductase subunit C from Azorhizobium caulinodans (strain ATCC 43989 / DSM 5975 / JCM 20966 / LMG 6465 / NBRC 14845 / NCIMB 13405 / ORS 571).